The following is a 227-amino-acid chain: Cytochrome c oxidase subunit 2 (227 aa).

At 1–14 (MAYPLQLGLQDATS) the chain is on the mitochondrial intermembrane side. Residues 15-45 (PIMEELMNFHDHTLMIVFLISSLVLYIISLM) form a helical membrane-spanning segment. The Mitochondrial matrix segment spans residues 46–59 (LTTKLTHTSTMDAQ). Residues 60–87 (EVETIWTILPAVILIMIALPSLRILYMM) form a helical membrane-spanning segment. At 88–227 (DEINNPVLTV…HFENWSASMI (140 aa)) the chain is on the mitochondrial intermembrane side. Cu cation contacts are provided by His-161, Cys-196, Glu-198, Cys-200, His-204, and Met-207. Glu-198 provides a ligand contact to Mg(2+).

It belongs to the cytochrome c oxidase subunit 2 family. Component of the cytochrome c oxidase (complex IV, CIV), a multisubunit enzyme composed of 14 subunits. The complex is composed of a catalytic core of 3 subunits MT-CO1, MT-CO2 and MT-CO3, encoded in the mitochondrial DNA, and 11 supernumerary subunits COX4I, COX5A, COX5B, COX6A, COX6B, COX6C, COX7A, COX7B, COX7C, COX8 and NDUFA4, which are encoded in the nuclear genome. The complex exists as a monomer or a dimer and forms supercomplexes (SCs) in the inner mitochondrial membrane with NADH-ubiquinone oxidoreductase (complex I, CI) and ubiquinol-cytochrome c oxidoreductase (cytochrome b-c1 complex, complex III, CIII), resulting in different assemblies (supercomplex SCI(1)III(2)IV(1) and megacomplex MCI(2)III(2)IV(2)). Found in a complex with TMEM177, COA6, COX18, COX20, SCO1 and SCO2. Interacts with TMEM177 in a COX20-dependent manner. Interacts with COX20. Interacts with COX16. Requires Cu cation as cofactor.

It is found in the mitochondrion inner membrane. The catalysed reaction is 4 Fe(II)-[cytochrome c] + O2 + 8 H(+)(in) = 4 Fe(III)-[cytochrome c] + 2 H2O + 4 H(+)(out). Functionally, component of the cytochrome c oxidase, the last enzyme in the mitochondrial electron transport chain which drives oxidative phosphorylation. The respiratory chain contains 3 multisubunit complexes succinate dehydrogenase (complex II, CII), ubiquinol-cytochrome c oxidoreductase (cytochrome b-c1 complex, complex III, CIII) and cytochrome c oxidase (complex IV, CIV), that cooperate to transfer electrons derived from NADH and succinate to molecular oxygen, creating an electrochemical gradient over the inner membrane that drives transmembrane transport and the ATP synthase. Cytochrome c oxidase is the component of the respiratory chain that catalyzes the reduction of oxygen to water. Electrons originating from reduced cytochrome c in the intermembrane space (IMS) are transferred via the dinuclear copper A center (CU(A)) of subunit 2 and heme A of subunit 1 to the active site in subunit 1, a binuclear center (BNC) formed by heme A3 and copper B (CU(B)). The BNC reduces molecular oxygen to 2 water molecules using 4 electrons from cytochrome c in the IMS and 4 protons from the mitochondrial matrix. This chain is Cytochrome c oxidase subunit 2 (MT-CO2), found in Zelotomys hildegardeae (Hildegarde's broad-headed mouse).